The sequence spans 467 residues: Light-independent protochlorophyllide reductase subunit N (467 aa).

Residues Cys-22, Cys-47, and Cys-107 each coordinate [4Fe-4S] cluster.

It belongs to the BchN/ChlN family. In terms of assembly, protochlorophyllide reductase is composed of three subunits; ChlL, ChlN and ChlB. Forms a heterotetramer of two ChlB and two ChlN subunits. The cofactor is [4Fe-4S] cluster.

It localises to the plastid. The protein resides in the chloroplast. It catalyses the reaction chlorophyllide a + oxidized 2[4Fe-4S]-[ferredoxin] + 2 ADP + 2 phosphate = protochlorophyllide a + reduced 2[4Fe-4S]-[ferredoxin] + 2 ATP + 2 H2O. The protein operates within porphyrin-containing compound metabolism; chlorophyll biosynthesis (light-independent). Component of the dark-operative protochlorophyllide reductase (DPOR) that uses Mg-ATP and reduced ferredoxin to reduce ring D of protochlorophyllide (Pchlide) to form chlorophyllide a (Chlide). This reaction is light-independent. The NB-protein (ChlN-ChlB) is the catalytic component of the complex. This Chara vulgaris (Common stonewort) protein is Light-independent protochlorophyllide reductase subunit N.